The chain runs to 502 residues: Glycerol kinase (502 aa).

Position 14 (Thr14) interacts with ADP. Positions 14, 15, and 16 each coordinate ATP. Thr14 provides a ligand contact to sn-glycerol 3-phosphate. Arg18 provides a ligand contact to ADP. Residues Arg84, Glu85, Tyr136, and Asp246 each contribute to the sn-glycerol 3-phosphate site. 5 residues coordinate glycerol: Arg84, Glu85, Tyr136, Asp246, and Gln247. ADP is bound by residues Thr268 and Gly311. ATP-binding residues include Thr268, Gly311, Gln315, and Gly412. The ADP site is built by Gly412 and Asn416.

It belongs to the FGGY kinase family. Homotetramer and homodimer (in equilibrium). Heterodimer with EIIA-Glc. Binds 1 zinc ion per glycerol kinase EIIA-Glc dimer. The zinc ion is important for dimerization.

The enzyme catalyses glycerol + ATP = sn-glycerol 3-phosphate + ADP + H(+). Its pathway is polyol metabolism; glycerol degradation via glycerol kinase pathway; sn-glycerol 3-phosphate from glycerol: step 1/1. Activity of this regulatory enzyme is affected by several metabolites. Allosterically and non-competitively inhibited by fructose 1,6-bisphosphate (FBP) and unphosphorylated phosphocarrier protein EIIA-Glc (III-Glc), an integral component of the bacterial phosphotransferase (PTS) system. Its function is as follows. Key enzyme in the regulation of glycerol uptake and metabolism. Catalyzes the phosphorylation of glycerol to yield sn-glycerol 3-phosphate. The polypeptide is Glycerol kinase (Salmonella arizonae (strain ATCC BAA-731 / CDC346-86 / RSK2980)).